We begin with the raw amino-acid sequence, 129 residues long: Beta-galactoside-binding lectin (129 aa).

Ser-1 bears the N-acetylserine mark. The region spanning 4 to 129 is the Galectin domain; the sequence is GVVDERMSFK…EARIYSIEIK (126 aa). Residue 69-75 coordinates a beta-D-galactoside; sequence WGTEQRE.

This protein binds beta-galactoside. Its physiological function is not yet known. In Electrophorus electricus (Electric eel), this protein is Beta-galactoside-binding lectin.